The sequence spans 423 residues: vacuole-related protein 17 (423 aa).

Ala-2 is modified (N-acetylalanine). The segment at 109-134 (ATVPNEAPNDSPQSQSTRSSLGSFQP) is disordered. The MYO2-binding stretch occupies residues 110–170 (TVPNEAPNDS…NPINEVDCPS (61 aa)). A compositionally biased stretch (polar residues) spans 116 to 131 (PNDSPQSQSTRSSLGS). Ser-119 carries the phosphoserine modification. Phosphothreonine is present on Thr-149. Residues 150-211 (PSKPPKKSVG…SKKPSSSDTY (62 aa)) are disordered. The residue at position 178 (Ser-178) is a Phosphoserine. Positions 182–192 (QPARNRTLRAA) are enriched in basic residues. The segment covering 199–211 (LNKSKKPSSSDTY) has biased composition (polar residues). Thr-248 carries the phosphothreonine modification. The residue at position 269 (Ser-269) is a Phosphoserine. The tract at residues 290 to 380 (SASFFRPSNP…ISESFQSKRG (91 aa)) is VAC8-binding.

This sequence belongs to the VAC17 family. As to quaternary structure, interacts with MYO2 and VAC8. Interacts with ATG18.

The protein localises to the vacuole membrane. In terms of biological role, vacuole-specific MYO2 receptor required for vacuole inheritance. Binds simultaneously to MYO2 and to VAC8, a vacuolar membrane protein, forming a transport complex which moves the attached vacuole membrane along actin cables into the bud. Once the vacuole arrives in the bud, VAC17 is degraded, depositing the vacuole in its correct location. The protein is vacuole-related protein 17 (VAC17) of Saccharomyces cerevisiae (strain ATCC 204508 / S288c) (Baker's yeast).